Reading from the N-terminus, the 285-residue chain is RNA polymerase sigma factor RpoH (285 aa).

Positions 53 to 122 are sigma-70 factor domain-2; that stretch reads LILSHLRFVV…IHEYVLRNWR (70 aa). The short motif at 77-80 is the Interaction with polymerase core subunit RpoC element; that stretch reads DLIQ. The interval 229 to 281 is sigma-70 factor domain-4; that stretch reads AMEGLDERSQDIIRARWLDEDNKSTLQELADRYGVSAERVRQLEKNAMKKLRA. Positions 254–273 form a DNA-binding region, H-T-H motif; sequence LQELADRYGVSAERVRQLEK.

Belongs to the sigma-70 factor family. RpoH subfamily. In terms of assembly, interacts with the RNA polymerase core enzyme.

Its subcellular location is the cytoplasm. Its function is as follows. Sigma factors are initiation factors that promote the attachment of RNA polymerase to specific initiation sites and are then released. This sigma factor is involved in regulation of expression of heat shock genes. The polypeptide is RNA polymerase sigma factor RpoH (Enterobacter cloacae).